Consider the following 242-residue polypeptide: High mobility group protein homolog (242 aa).

2 DNA-binding regions (HMG box) span residues 54–122 (PKRN…EANK) and 126–197 (KPVK…IDKE).

It is found in the host nucleus. The polypeptide is High mobility group protein homolog (EF1) (Acheta domesticus (House cricket)).